Consider the following 383-residue polypeptide: N-acetyldiaminopimelate deacetylase (383 aa).

Residue D72 is part of the active site. E131 functions as the Proton acceptor in the catalytic mechanism.

The protein belongs to the peptidase M20A family. N-acetyldiaminopimelate deacetylase subfamily.

It carries out the reaction N-acetyl-(2S,6S)-2,6-diaminopimelate + H2O = (2S,6S)-2,6-diaminopimelate + acetate. It functions in the pathway amino-acid biosynthesis; L-lysine biosynthesis via DAP pathway; LL-2,6-diaminopimelate from (S)-tetrahydrodipicolinate (acetylase route): step 3/3. Catalyzes the conversion of N-acetyl-diaminopimelate to diaminopimelate and acetate. This chain is N-acetyldiaminopimelate deacetylase, found in Lacticaseibacillus casei (strain BL23) (Lactobacillus casei).